The chain runs to 514 residues: Monocarboxylate transporter 10 (514 aa).

Residues 1-64 are disordered; that stretch reads MVPSQEEPAA…TGNQEPPEPP (64 aa). The Cytoplasmic segment spans residues 1–65; that stretch reads MVPSQEEPAA…GNQEPPEPPE (65 aa). Residues 66–86 form a helical membrane-spanning segment; that stretch reads GGWGWLVMLAAMWCNGSVFGI. Residues 87–113 lie on the Extracellular side of the membrane; that stretch reads QNAYGVLFVSMLETFGAKDDDNMAFKA. A helical transmembrane segment spans residues 114–134; sequence AWVGSLSMGMIFFCCPIVSVF. Residues 135-143 lie on the Cytoplasmic side of the membrane; it reads TDMFGCRRT. A helical membrane pass occupies residues 144 to 164; the sequence is AVLGAAVGFVGLMSSSFVSSI. Over 165 to 170 the chain is Extracellular; it reads EPLYFT. A helical membrane pass occupies residues 171–191; the sequence is YGVVFACGCSFAYQPSLVILG. Residues 192 to 199 lie on the Cytoplasmic side of the membrane; the sequence is HYFKKRLG. A helical membrane pass occupies residues 200–220; the sequence is LVNGIVTAGSSVFTILLPLLL. The Extracellular segment spans residues 221–227; sequence GNLTSTV. The helical transmembrane segment at 228–248 threads the bilayer; the sequence is GLCYTLRILCIFMFVLFLAGF. At 249–290 the chain is on the cytoplasmic side; sequence TYRPLVPSSKEKESEDSRSSFFSRRKLSPPKKIFNFALFKET. S262 carries the phosphoserine modification. Residues 291 to 311 traverse the membrane as a helical segment; that stretch reads AYAVWAAGIPLALFGYFVPYV. The Extracellular portion of the chain corresponds to 312–328; sequence HLMNHVKERFKDVNNKE. The helical transmembrane segment at 329–349 threads the bilayer; sequence VLFMCIGVTSGVGRLLFGRIA. Position 350 (D350) is a topological domain, cytoplasmic. A helical membrane pass occupies residues 351–371; sequence YLPGVKKVYLQVLSFFFIGLT. Residues 372 to 395 are Extracellular-facing; the sequence is SMMIPLCSVFGALIALCLIMGLFD. The chain crosses the membrane as a helical span at residues 396–416; it reads GCFISIMAPIAFELVGPQDAS. Topologically, residues 417-418 are cytoplasmic; sequence QA. The chain crosses the membrane as a helical span at residues 419 to 439; the sequence is IGFLLGFMSIPMTVGPPVAGL. At 440–450 the chain is on the extracellular side; the sequence is LHDKLGSYDLA. The helical transmembrane segment at 451–471 threads the bilayer; sequence FYLAGIPPFIGGAVLCLIPWI. Topologically, residues 472–514 are cytoplasmic; sequence HSKKQREISKNTGGEKMEKMLANQSSLLSSSSGIFKKESDSII. Residues S497, S500, S502, and S503 each carry the phosphoserine modification.

Belongs to the major facilitator superfamily. Monocarboxylate porter (TC 2.A.1.13) family. In terms of processing, not N-glycosylated. Strongly expressed in intestine, placenta and liver. In small intestine is detected in the basolateral membrane (at protein level).

The protein resides in the cell membrane. It is found in the basolateral cell membrane. It carries out the reaction L-tryptophan(in) = L-tryptophan(out). It catalyses the reaction L-tyrosine(in) = L-tyrosine(out). The enzyme catalyses L-phenylalanine(in) = L-phenylalanine(out). The catalysed reaction is 3,3',5-triiodo-L-thyronine(out) = 3,3',5-triiodo-L-thyronine(in). It carries out the reaction L-thyroxine(out) = L-thyroxine(in). Its function is as follows. Sodium- and proton-independent thyroid hormones and aromatic acids transporter. Mediates both uptake and efflux of 3,5,3'-triiodothyronine (T3) and 3,5,3',5'-tetraiodothyronine (T4) with high affinity, suggesting a role in the homeostasis of thyroid hormone levels. Responsible for low affinity bidirectional transport of the aromatic amino acids, such as phenylalanine, tyrosine, tryptophan and L-3,4-dihydroxyphenylalanine (L-dopa). Plays an important role in homeostasis of aromatic amino acids. In Rattus norvegicus (Rat), this protein is Monocarboxylate transporter 10 (Slc16a10).